We begin with the raw amino-acid sequence, 299 residues long: Tyrosine recombinase XerC (299 aa).

The region spanning methionine 1–leucine 85 is the Core-binding (CB) domain. The region spanning arginine 106–aspartate 285 is the Tyr recombinase domain. Residues arginine 146, lysine 170, histidine 237, arginine 240, and histidine 263 contribute to the active site. Tyrosine 272 acts as the O-(3'-phospho-DNA)-tyrosine intermediate in catalysis.

This sequence belongs to the 'phage' integrase family. XerC subfamily. In terms of assembly, forms a cyclic heterotetrameric complex composed of two molecules of XerC and two molecules of XerD.

The protein resides in the cytoplasm. Its function is as follows. Site-specific tyrosine recombinase, which acts by catalyzing the cutting and rejoining of the recombining DNA molecules. The XerC-XerD complex is essential to convert dimers of the bacterial chromosome into monomers to permit their segregation at cell division. It also contributes to the segregational stability of plasmids. The chain is Tyrosine recombinase XerC from Azotobacter vinelandii (strain DJ / ATCC BAA-1303).